Here is a 179-residue protein sequence, read N- to C-terminus: Ribosome maturation factor RimM (179 aa).

The region spanning 102–179 is the PRC barrel domain; the sequence is DGEYYWYQLE…EMKVDWDADF (78 aa).

This sequence belongs to the RimM family. In terms of assembly, binds ribosomal protein uS19.

It is found in the cytoplasm. Functionally, an accessory protein needed during the final step in the assembly of 30S ribosomal subunit, possibly for assembly of the head region. Essential for efficient processing of 16S rRNA. May be needed both before and after RbfA during the maturation of 16S rRNA. It has affinity for free ribosomal 30S subunits but not for 70S ribosomes. The polypeptide is Ribosome maturation factor RimM (Pseudomonas savastanoi pv. phaseolicola (strain 1448A / Race 6) (Pseudomonas syringae pv. phaseolicola (strain 1448A / Race 6))).